Here is a 271-residue protein sequence, read N- to C-terminus: Aquaporin-11 (271 aa).

Residues 1–14 lie on the Cytoplasmic side of the membrane; the sequence is MSPLLGLRSELQDT. The chain crosses the membrane as a helical span at residues 15–35; the sequence is CTSLGLMLSVVLLMGLARVVA. Residues 36–41 are Lumenal-facing; sequence RQQLHR. The helical transmembrane segment at 42–62 threads the bilayer; sequence PVAHAFVLEFLATFQLCCCTH. Over 63-74 the chain is Cytoplasmic; it reads ELQLLSEQHPAH. The chain crosses the membrane as a helical span at residues 75–95; it reads PTWTLTLVYFFSLVHGLTLVG. The Lumenal segment spans residues 96 to 163; the sequence is TSSNPCGVMM…ACKNPIRVDL (68 aa). Positions 99-101 match the NPC motif; sequence NPC. A helical transmembrane segment spans residues 164-184; it reads LKAVITEAVCSFLFHSALLHF. Over 185–194 the chain is Cytoplasmic; the sequence is QEVRTKLRIH. A helical transmembrane segment spans residues 195–215; it reads LLAALITFLVYAGGSLTGAVF. The short motif at 216–218 is the NPA element; it reads NPA. At 216–234 the chain is on the lumenal side; sequence NPALALSLHFMCFDEAFPQ. The chain crosses the membrane as a helical span at residues 235–255; that stretch reads FFIVYWLAPSLGILLMILMFS. Over 256 to 271 the chain is Cytoplasmic; sequence FFLPWLHNNHTINKKE.

It belongs to the MIP/aquaporin (TC 1.A.8) family. AQP11/AQP12 subfamily. As to quaternary structure, homodimer; disulfide-linked. Homotetramer. Can also form homomultimer. In terms of processing, not glycosylated. Detected in the sperm head and tail (at protein level). Expressed in subcutaneous adipocytes. Expressed in testis, kidney and ejaculated spermatozoa.

The protein localises to the endoplasmic reticulum membrane. It is found in the cytoplasmic vesicle membrane. The protein resides in the cell membrane. The enzyme catalyses H2O(in) = H2O(out). The catalysed reaction is glycerol(in) = glycerol(out). It catalyses the reaction H2O2(out) = H2O2(in). Its function is as follows. Channel protein that facilitates the transport of water, glycerol and hydrogen peroxide across membrane of cell or organelles guaranteeing intracellular homeostasis in several organes like liver, kidney and brain. In situation of stress, participates in endoplasmic reticulum (ER) homeostasis by regulating redox homeostasis through the transport of hydrogen peroxide across the endoplasmic reticulum membrane thereby regulating the oxidative stress through the NADPH oxidase 2 pathway. Plays a role by maintaining an environment suitable for translation or protein foldings in the ER lumen namely by participating in the PKD1 glycosylation processing resulting in regulation of PKD1 membrane trafficking thereby preventing the accumulation of unfolding protein in ER. Plays a role in the proximal tubule function by regulating its endosomal acidification. May play a role in postnatal kidney development. In Homo sapiens (Human), this protein is Aquaporin-11.